The sequence spans 663 residues: DNA ligase (663 aa).

NAD(+)-binding positions include 31–35, 80–81, and E110; these read DFEYD and SL. K112 serves as the catalytic N6-AMP-lysine intermediate. NAD(+) is bound by residues R133, E168, K284, and K308. The Zn(2+) site is built by C402, C405, C420, and C425. The BRCT domain maps to 586-663; the sequence is IKDNRFEGKT…DEDKFRKMIE (78 aa).

The protein belongs to the NAD-dependent DNA ligase family. LigA subfamily. The cofactor is Mg(2+). It depends on Mn(2+) as a cofactor.

The enzyme catalyses NAD(+) + (deoxyribonucleotide)n-3'-hydroxyl + 5'-phospho-(deoxyribonucleotide)m = (deoxyribonucleotide)n+m + AMP + beta-nicotinamide D-nucleotide.. DNA ligase that catalyzes the formation of phosphodiester linkages between 5'-phosphoryl and 3'-hydroxyl groups in double-stranded DNA using NAD as a coenzyme and as the energy source for the reaction. It is essential for DNA replication and repair of damaged DNA. The sequence is that of DNA ligase from Acetivibrio thermocellus (strain ATCC 27405 / DSM 1237 / JCM 9322 / NBRC 103400 / NCIMB 10682 / NRRL B-4536 / VPI 7372) (Clostridium thermocellum).